We begin with the raw amino-acid sequence, 319 residues long: Olfactory receptor 5B21 (319 aa).

Topologically, residues 1–26 are extracellular; sequence MTSMENITEVTEFILLGLTDDPNLQV. Asn-6 carries N-linked (GlcNAc...) asparagine glycosylation. A helical transmembrane segment spans residues 27–47; it reads PLLLIFLFIYLVTLIGNGGMM. Over 48–55 the chain is Cytoplasmic; sequence VIIFSDSH. Residues 56 to 76 form a helical membrane-spanning segment; the sequence is LHTPMYFFLSNLSFVDLGYSS. At 77-100 the chain is on the extracellular side; that stretch reads AVAPKMVAALQSGNKVISYNGCAA. Cysteines 98 and 190 form a disulfide. Residues 101–121 traverse the membrane as a helical segment; sequence QFFFFVGFATVECYLLASMAY. The Cytoplasmic portion of the chain corresponds to 122 to 134; sequence DRHAAVCRPLHYT. Residues 135–155 traverse the membrane as a helical segment; sequence TTMTTGVCTILTIGSYTCGFL. The Extracellular segment spans residues 156 to 197; that stretch reads NASIHAADTFKLSFCGSNKINHFFCDIPPLLALACSSTHISK. A helical membrane pass occupies residues 198 to 218; that stretch reads LVVFFVVGFNVFFTLLVIIIS. Residues 219–238 are Cytoplasmic-facing; it reads YFFIYIAIQNMKSSEGRKKA. Residues 239-259 traverse the membrane as a helical segment; that stretch reads FSTCASHLTAVSIFYGTIIFM. Residues 260 to 272 are Extracellular-facing; the sequence is YLQPSSGQSMDTD. A helical transmembrane segment spans residues 273–293; that stretch reads KIASVFYTVVIPMLNPLIYSL. Residues 294-319 are Cytoplasmic-facing; that stretch reads RNREVKSALWKILNRFYPASFSVSRK.

It belongs to the G-protein coupled receptor 1 family.

It is found in the cell membrane. Functionally, odorant receptor. The chain is Olfactory receptor 5B21 from Mus musculus (Mouse).